The primary structure comprises 355 residues: DNA polymerase IV (355 aa).

In terms of domain architecture, UmuC spans 7–188 (IIHIDMDCFY…LPVRKLFGVG (182 aa)). Mg(2+) contacts are provided by aspartate 11 and aspartate 106. Glutamate 107 is an active-site residue.

This sequence belongs to the DNA polymerase type-Y family. As to quaternary structure, monomer. Mg(2+) serves as cofactor.

The protein localises to the cytoplasm. It carries out the reaction DNA(n) + a 2'-deoxyribonucleoside 5'-triphosphate = DNA(n+1) + diphosphate. Poorly processive, error-prone DNA polymerase involved in untargeted mutagenesis. Copies undamaged DNA at stalled replication forks, which arise in vivo from mismatched or misaligned primer ends. These misaligned primers can be extended by PolIV. Exhibits no 3'-5' exonuclease (proofreading) activity. May be involved in translesional synthesis, in conjunction with the beta clamp from PolIII. In Legionella pneumophila (strain Corby), this protein is DNA polymerase IV.